Reading from the N-terminus, the 166-residue chain is PTS system glucose-specific EIIA component (166 aa).

The PTS EIIA type-1 domain maps to 34–138 (DPVFAQKMMG…SVISPIIITN (105 aa)). Histidine 71 and histidine 86 together coordinate Zn(2+). The active-site Tele-phosphohistidine intermediate; for EIIA activity is the histidine 86. The residue at position 86 (histidine 86) is a Phosphohistidine; by HPr.

Heterodimer with glycerol kinase (glpk). It depends on Zn(2+) as a cofactor.

The protein resides in the cytoplasm. Its function is as follows. The phosphoenolpyruvate-dependent sugar phosphotransferase system (sugar PTS), a major carbohydrate active transport system, catalyzes the phosphorylation of incoming sugar substrates concomitantly with their translocation across the cell membrane. The enzyme II complex composed of PtsG and Crr is involved in glucose transport. The protein is PTS system glucose-specific EIIA component (crr) of Staphylococcus aureus (strain MSSA476).